The chain runs to 149 residues: MICLLPLIAVMLFVFATHTVLALEIATGIDAPETEFSASTQTTRVSFRRITSVDNKRFLRQETTFEEKPSVNDVHAEERSSFYRKFLYRLFGDRMDVEAKVLARDSNWLINIFRRKFLRWAGREEHPHKATTFDTTCCQVAPYDPVTSS.

The first 22 residues, 1-22 (MICLLPLIAVMLFVFATHTVLA), serve as a signal peptide directing secretion. A RxLR-dEER motif is present at residues 57–79 (RFLRQETTFEEKPSVNDVHAEER).

It belongs to the RxLR effector family.

The protein resides in the secreted. It is found in the host membrane. Its function is as follows. Secreted effector that completely suppresses the host cell death induced by cell death-inducing proteins. This Plasmopara viticola (Downy mildew of grapevine) protein is Secreted RxLR effector protein 47.